Consider the following 179-residue polypeptide: MVRLQEQYQAEVKQALRDRFGYDNVMEIPRLSKVTLNMGLGEAVRDKKVLESAQAEMAEIAGQKPILTYARKSVAGFKIRDGWPIGCKVTLRRERMYEFLDRFINVAAPRIRDFRGFNPRSFDGRGNYNLGVREQLIFPEIDYEKVDAVRGMDITITTTAKTDEEGQALLEGFNFPFRK.

It belongs to the universal ribosomal protein uL5 family. As to quaternary structure, part of the 50S ribosomal subunit; part of the 5S rRNA/L5/L18/L25 subcomplex. Contacts the 5S rRNA and the P site tRNA. Forms a bridge to the 30S subunit in the 70S ribosome.

This is one of the proteins that bind and probably mediate the attachment of the 5S RNA into the large ribosomal subunit, where it forms part of the central protuberance. In the 70S ribosome it contacts protein S13 of the 30S subunit (bridge B1b), connecting the 2 subunits; this bridge is implicated in subunit movement. Contacts the P site tRNA; the 5S rRNA and some of its associated proteins might help stabilize positioning of ribosome-bound tRNAs. This Alkalilimnicola ehrlichii (strain ATCC BAA-1101 / DSM 17681 / MLHE-1) protein is Large ribosomal subunit protein uL5.